The chain runs to 653 residues: MAEAPQVVEIDPDFEPLPRPRSCTWPLPRPEFSQSNSATSSPAPSGGATANPDASAGLPPASAAAVSADFMSNLSLLEESEDFPQAPGSVAAAVAAAAAAATGGLCGDFQGLEAGCLHPAPPQPPPPGPLSQHPPVPPAAGPLAGQPRKSSSSRRNAWGNLSYADLITKAIESSAEKRLTLSQIYEWMVKSVPYFKDKGDSNSSAGWKNSIRHNLSLHSKFIRVQNEGTGKSSWWMLNPEGGKSGKSPRRRAASMDNNSKFAKSRGQAAKKKASLQSGQEGAGDSPGSQFSKWPASPGSHSNDDFDNWSTFRPRTSSNASTISGRFSPIMTEQDDLGDGDVHSLVYPPSASKMASTLPSLSEISNPENMENLLDNLNLLSSPTSLTVSTQSSPGSMMQQTPCYSFAPPSTSLNSPSPNYQKYTYGQSSMSPLSQMPMQTLQDNKSSYGGLNQFNCAQGLLKELLTSDSPPHNDIMSSVDPGVAQPNSRVLGQNVMLGPNSVMPAYGNQASHNKMMNPSSHTHPGHAQQTSVVNGRALPHTVNTMPHTSGMNRLTPVKTPLQVPLLHHMQMSALGGYSSVSSCSGYGRMGVLHQEKLPSDLDGMFIERLDCDMESIIRNDLMDGDALDFNFDNVLPNQSFPHGVKTTTHSWVSG.

Disordered regions lie at residues 1-64 (MAEA…ASAA) and 117-156 (LHPA…SRRN). Thr-24 carries the post-translational modification Phosphothreonine; by PKB/AKT1 or PKB/AKT2 and SGK1. Positions 35-64 (SNSATSSPAPSGGATANPDASAGLPPASAA) are enriched in low complexity. Residues 119-140 (PAPPQPPPPGPLSQHPPVPPAA) show a composition bias toward pro residues. Positions 157–233 (AWGNLSYADL…VQNEGTGKSS (77 aa)) form a DNA-binding region, fork-head. DNA-binding regions lie at residues 209–216 (NSIRHNLS) and 232–235 (SSWW). Ser-210 is subject to Phosphoserine; by STK4/MST1. Residues Ser-216, Ser-232, and Ser-233 each carry the phosphoserine modification. The disordered stretch occupies residues 232–335 (SSWWMLNPEG…FSPIMTEQDD (104 aa)). An N6-acetyllysine mark is found at Lys-243 and Lys-246. Ser-247 is subject to Phosphoserine; by CDK1. Arg-249 and Arg-251 each carry omega-N-methylarginine; by PRMT1. Positions 249–251 (RRR) match the Nuclear localization signal motif. At Ser-254 the chain carries Phosphoserine; by PKB/AKT1 and SGK1. N6-acetyllysine occurs at positions 260, 263, and 272. Residues 281–561 (GAGDSPGSQF…RLTPVKTPLQ (281 aa)) form a sufficient for interaction with NLK region. Ser-285 and Ser-296 each carry phosphoserine. Residues 307–324 (NWSTFRPRTSSNASTISG) are compositionally biased toward polar residues. Ser-317 carries the phosphoserine; by PKB/AKT1 or PKB/AKT2 modification. Ser-320 bears the Phosphoserine; by CK1 and SGK1 mark. Ser-323 carries the phosphoserine modification. Ser-327 carries the post-translational modification Phosphoserine; by DYRK1A. Thr-331 carries the phosphothreonine modification. The tract at residues 361–457 (SEISNPENME…GGLNQFNCAQ (97 aa)) is required for interaction with RUNX2. Lys-421 bears the N6-acetyllysine mark. Residues 460-464 (LKELL) carry the Required for interaction with SIRT1 motif.

In terms of assembly, interacts with LRPPRC. Interacts with RUNX2; the interaction inhibits RUNX2 transcriptional activity and mediates the IGF1/insulin-dependent BGLAP expression in osteoblasts Interacts with PPP2R1A; the interaction regulates the dephosphorylation of FOXO1 at Thr-24 and Ser-254 leading to its nuclear import. Interacts with NLK. Interacts with SIRT1; the interaction results in the deacetylation of FOXO1 leading to activation of FOXO1-mediated transcription of genes involved in DNA repair and stress resistance. Binds to CDK1. Interacts with the 14-3-3 proteins, YWHAG and YWHAZ; the interactions require insulin-stimulated phosphorylation on Thr-24, promote nuclear exit and loss of transcriptional activity. Interacts with SKP2; the interaction ubiquitinates FOXO1 leading to its proteasomal degradation. The interaction requires the presence of KRIT1. Interacts (via the C-terminal half) with ATF4 (via its DNA-binding domain); the interaction occurs in osteoblasts, regulates glucose homeostasis via suppression of beta-cell proliferation and subsequent decrease in insulin production. Interacts with PRMT1; the interaction methylates FOXO1, prevents PKB/AKT1 phosphorylation and retains FOXO1 in the nucleus. Interacts with EP300 and CREBBP; the interactions acetylate FOXO1. Interacts with SIRT2; the interaction is disrupted in response to oxidative stress or serum deprivation, leading to increased level of acetylated FOXO1, which promotes stress-induced autophagy by stimulating E1-like activating enzyme ATG7. Interacts (acetylated form) with ATG7; the interaction is increased in response to oxidative stress or serum deprivation and promotes the autophagic process leading to cell death. Interacts (acetylated form) with PPARG. Interacts with XBP1; this interaction is direct and leads to FOXO1 ubiquitination and degradation via the proteasome pathway. Interacts with WDFY2. Forms a complex with WDFY2 and AKT1. Interacts with CRY1. Interacts with PPIA/CYPA; the interaction promotes FOXO1 dephosphorylation, nuclear accumulation and transcriptional activity. Interacts with TOX4; FOXO1 is required for full induction of TOX4-dependent activity and the interaction is inhibited by insulin. Interacts (when phosphorylated on Ser-254) with STUB1/CHIP. Phosphorylation by NLK promotes nuclear export and inhibits the transcriptional activity. In response to growth factors, phosphorylation on Thr-24, Ser-254 and Ser-320 by PKB/AKT1 promotes nuclear export and inactivation of transactivational activity. Phosphorylation on Thr-24 is required for binding 14-3-3 proteins. Phosphorylation of Ser-254 decreases DNA-binding activity and promotes the phosphorylation of Thr-24 and Ser-317, permitting phosphorylation of Ser-320 and Ser-323, probably by CDK1, leading to nuclear exclusion and loss of function. Stress signals, such as response to oxygen or nitric oxide, attenuate the PKB/AKT1-mediated phosphorylation leading to nuclear retention. Phosphorylation of Ser-327 is independent of IGF1 and leads to reduced function. Dephosphorylated on Thr-24 and Ser-254 by PP2A in beta-cells under oxidative stress leading to nuclear retention. Phosphorylation of Ser-247 by CDK1 disrupts binding of 14-3-3 proteins leading to nuclear accumulation and has no effect on DNA binding nor transcriptional activity. Phosphorylation by STK4/MST1 on Ser-210, upon oxidative stress, inhibits binding to 14-3-3 proteins and nuclear export. PPIA/CYPA promotes its dephosphorylation on Ser-254. In terms of processing, ubiquitinated by SKP2. Ubiquitination leads to proteasomal degradation. Ubiquitinated by STUB1/CHIP; when Ser-254 is phosphorylated. Post-translationally, methylation inhibits AKT1-mediated phosphorylation at Ser-254 and is increased by oxidative stress. Acetylated. Acetylation at Lys-260 and Lys-272 are necessary for autophagic cell death induction. Deacetylated by SIRT2 in response to oxidative stress or serum deprivation, thereby negatively regulating FOXO1-mediated autophagic cell death. Once in the nucleus, acetylated by CREBBP/EP300. Acetylation diminishes the interaction with target DNA and attenuates the transcriptional activity. It increases the phosphorylation at Ser-254. Deacetylation by SIRT1 results in reactivation of the transcriptional activity. Oxidative stress by hydrogen peroxide treatment appears to promote deacetylation and uncoupling of insulin-induced phosphorylation. By contrast, resveratrol acts independently of acetylation. Acetylated at Lys-421, promoting its localization to the nucleus and transcription factor activity. Deacetylation at Lys-421 by SIRT6, promotes its translocation into the cytoplasm, preventing its transcription factor activity. Deacetylation and subsequent inhibition by SIRT6 has different effects depending on cell types: it inhibits gluconeogenesis in hepatocytes, promotes glucose sensing in pancreatic beta-cells and regulates lipid catabolism in brown adipocytes.

It is found in the cytoplasm. It localises to the nucleus. In terms of biological role, transcription factor that is the main target of insulin signaling and regulates metabolic homeostasis in response to oxidative stress. Binds to the insulin response element (IRE) with consensus sequence 5'-TT[G/A]TTTTG-3' and the related Daf-16 family binding element (DBE) with consensus sequence 5'-TT[G/A]TTTAC-3'. Activity suppressed by insulin. Main regulator of redox balance and osteoblast numbers and controls bone mass. Orchestrates the endocrine function of the skeleton in regulating glucose metabolism. Also acts as a key regulator of chondrogenic commitment of skeletal progenitor cells in response to lipid availability: when lipids levels are low, translocates to the nucleus and promotes expression of SOX9, which induces chondrogenic commitment and suppresses fatty acid oxidation. Acts synergistically with ATF4 to suppress osteocalcin/BGLAP activity, increasing glucose levels and triggering glucose intolerance and insulin insensitivity. Also suppresses the transcriptional activity of RUNX2, an upstream activator of osteocalcin/BGLAP. Acts as an inhibitor of glucose sensing in pancreatic beta cells by acting as a transcription repressor and suppressing expression of PDX1. In hepatocytes, promotes gluconeogenesis by acting together with PPARGC1A and CEBPA to activate the expression of genes such as IGFBP1, G6PC1 and PCK1. Also promotes gluconeogenesis by directly promoting expression of PPARGC1A and G6PC1. Important regulator of cell death acting downstream of CDK1, PKB/AKT1 and STK4/MST1. Promotes neural cell death. Mediates insulin action on adipose tissue. Regulates the expression of adipogenic genes such as PPARG during preadipocyte differentiation and, adipocyte size and adipose tissue-specific gene expression in response to excessive calorie intake. Regulates the transcriptional activity of GADD45A and repair of nitric oxide-damaged DNA in beta-cells. Required for the autophagic cell death induction in response to starvation or oxidative stress in a transcription-independent manner. Mediates the function of MLIP in cardiomyocytes hypertrophy and cardiac remodeling. Positive regulator of apoptosis in cardiac smooth muscle cells as a result of its transcriptional activation of pro-apoptotic genes. Regulates endothelial cell (EC) viability and apoptosis in a PPIA/CYPA-dependent manner via transcription of CCL2 and BCL2L11 which are involved in EC chemotaxis and apoptosis. This chain is Forkhead box protein O1 (FOXO1), found in Ictidomys tridecemlineatus (Thirteen-lined ground squirrel).